The chain runs to 111 residues: uncharacterized protein (111 aa).

This sequence to M.tuberculosis Rv1271c.

This is an uncharacterized protein from Mycobacterium bovis (strain ATCC BAA-935 / AF2122/97).